Consider the following 164-residue polypeptide: Phosphopantetheine adenylyltransferase (164 aa).

Ser-9 lines the substrate pocket. Residues 9-10 (SF) and His-17 contribute to the ATP site. 3 residues coordinate substrate: Lys-41, Leu-74, and Arg-88. ATP is bound by residues 89-91 (GIR), Glu-99, and 124-130 (YAEVSST).

It belongs to the bacterial CoaD family. Homohexamer. The cofactor is Mg(2+).

Its subcellular location is the cytoplasm. The catalysed reaction is (R)-4'-phosphopantetheine + ATP + H(+) = 3'-dephospho-CoA + diphosphate. The protein operates within cofactor biosynthesis; coenzyme A biosynthesis; CoA from (R)-pantothenate: step 4/5. Reversibly transfers an adenylyl group from ATP to 4'-phosphopantetheine, yielding dephospho-CoA (dPCoA) and pyrophosphate. This Chromobacterium violaceum (strain ATCC 12472 / DSM 30191 / JCM 1249 / CCUG 213 / NBRC 12614 / NCIMB 9131 / NCTC 9757 / MK) protein is Phosphopantetheine adenylyltransferase.